A 286-amino-acid chain; its full sequence is Phosphatidylserine decarboxylase proenzyme (286 aa).

Catalysis depends on charge relay system; for autoendoproteolytic cleavage activity residues Asp90, His147, and Ser253. Catalysis depends on Ser253, which acts as the Schiff-base intermediate with substrate; via pyruvic acid; for decarboxylase activity. Ser253 is subject to Pyruvic acid (Ser); by autocatalysis.

It belongs to the phosphatidylserine decarboxylase family. PSD-B subfamily. Prokaryotic type I sub-subfamily. As to quaternary structure, heterodimer of a large membrane-associated beta subunit and a small pyruvoyl-containing alpha subunit. Requires pyruvate as cofactor. Post-translationally, is synthesized initially as an inactive proenzyme. Formation of the active enzyme involves a self-maturation process in which the active site pyruvoyl group is generated from an internal serine residue via an autocatalytic post-translational modification. Two non-identical subunits are generated from the proenzyme in this reaction, and the pyruvate is formed at the N-terminus of the alpha chain, which is derived from the carboxyl end of the proenzyme. The autoendoproteolytic cleavage occurs by a canonical serine protease mechanism, in which the side chain hydroxyl group of the serine supplies its oxygen atom to form the C-terminus of the beta chain, while the remainder of the serine residue undergoes an oxidative deamination to produce ammonia and the pyruvoyl prosthetic group on the alpha chain. During this reaction, the Ser that is part of the protease active site of the proenzyme becomes the pyruvoyl prosthetic group, which constitutes an essential element of the active site of the mature decarboxylase.

The protein resides in the cell membrane. The catalysed reaction is a 1,2-diacyl-sn-glycero-3-phospho-L-serine + H(+) = a 1,2-diacyl-sn-glycero-3-phosphoethanolamine + CO2. It participates in phospholipid metabolism; phosphatidylethanolamine biosynthesis; phosphatidylethanolamine from CDP-diacylglycerol: step 2/2. Its function is as follows. Catalyzes the formation of phosphatidylethanolamine (PtdEtn) from phosphatidylserine (PtdSer). The polypeptide is Phosphatidylserine decarboxylase proenzyme (Pseudoalteromonas atlantica (strain T6c / ATCC BAA-1087)).